Consider the following 493-residue polypeptide: Probable cytosol aminopeptidase (493 aa).

Mn(2+) contacts are provided by lysine 260 and aspartate 265. Lysine 272 is a catalytic residue. Mn(2+)-binding residues include aspartate 283, aspartate 342, and glutamate 344. The active site involves arginine 346.

It belongs to the peptidase M17 family. Requires Mn(2+) as cofactor.

It localises to the cytoplasm. The catalysed reaction is Release of an N-terminal amino acid, Xaa-|-Yaa-, in which Xaa is preferably Leu, but may be other amino acids including Pro although not Arg or Lys, and Yaa may be Pro. Amino acid amides and methyl esters are also readily hydrolyzed, but rates on arylamides are exceedingly low.. It carries out the reaction Release of an N-terminal amino acid, preferentially leucine, but not glutamic or aspartic acids.. Presumably involved in the processing and regular turnover of intracellular proteins. Catalyzes the removal of unsubstituted N-terminal amino acids from various peptides. The protein is Probable cytosol aminopeptidase of Clostridium perfringens (strain 13 / Type A).